The sequence spans 345 residues: Uroporphyrinogen decarboxylase (345 aa).

Substrate-binding positions include 27 to 31 (RQAGR), F46, D76, Y152, S207, and H320.

It belongs to the uroporphyrinogen decarboxylase family. In terms of assembly, homodimer.

Its subcellular location is the cytoplasm. It catalyses the reaction uroporphyrinogen III + 4 H(+) = coproporphyrinogen III + 4 CO2. It functions in the pathway porphyrin-containing compound metabolism; protoporphyrin-IX biosynthesis; coproporphyrinogen-III from 5-aminolevulinate: step 4/4. Functionally, catalyzes the decarboxylation of four acetate groups of uroporphyrinogen-III to yield coproporphyrinogen-III. The polypeptide is Uroporphyrinogen decarboxylase (Geobacillus thermodenitrificans (strain NG80-2)).